The primary structure comprises 348 residues: Erlin-1 (348 aa).

The Cytoplasmic portion of the chain corresponds to 1-7; sequence MNMTQAR. A helical transmembrane segment spans residues 8-28; that stretch reads VLVAAVVGLVAVLLYASIHKI. Residues 29–348 are Lumenal-facing; the sequence is EEGHLAVYYR…NVIQNKESTG (320 aa). N-linked (GlcNAc...) asparagine glycosylation occurs at Asn-108. Lys-269 carries the post-translational modification N6-acetyllysine. The tract at residues 325-348 is disordered; that stretch reads SSLPSKEALEPSGENVIQNKESTG. Polar residues predominate over residues 339–348; it reads NVIQNKESTG.

Belongs to the band 7/mec-2 family. Forms a heteromeric complex with ERLIN2. In complex with ERLIN2, interacts with RNF170. Interacts with AMFR and SYVN1. Deubiquitinated by USP25; leading to stabilization. In terms of tissue distribution, expressed in heart, placenta, liver, kidney, pancreas, prostate, testis, ovary and small intestine.

It is found in the endoplasmic reticulum membrane. Functionally, component of the ERLIN1/ERLIN2 complex which mediates the endoplasmic reticulum-associated degradation (ERAD) of inositol 1,4,5-trisphosphate receptors (IP3Rs). Involved in regulation of cellular cholesterol homeostasis by regulation the SREBP signaling pathway. Binds cholesterol and may promote ER retention of the SCAP-SREBF complex. Its function is as follows. (Microbial infection) Required early in hepatitis C virus (HCV) infection to initiate RNA replication, and later in the infection to support infectious virus production. In Homo sapiens (Human), this protein is Erlin-1.